Reading from the N-terminus, the 1399-residue chain is Alpha-glucan water dikinase 1, chloroplastic (1399 aa).

A chloroplast-targeting transit peptide spans Met1–Ala75. Val76 carries the post-translational modification N-acetylvaline. Residues Leu265–Ile306 form a disordered region. Polar residues predominate over residues Asn272–Ser283. A compositionally biased stretch (basic and acidic residues) spans Gly284–Ile306. His1004 acts as the Tele-phosphohistidine intermediate in catalysis.

It belongs to the PEP-utilizing enzyme family. Homodimer. Requires Mg(2+) as cofactor.

It localises to the plastid. The protein localises to the chloroplast. The enzyme catalyses [(1-&gt;4)-alpha-D-glucosyl](n) + n ATP + n H2O = [(1-&gt;4)-6-phospho-alpha-D-glucosyl](n) + n AMP + n phosphate + 2n H(+). In terms of biological role, mediates the incorporation of phosphate into starch-like alpha-glucan, mostly at the C-6 position of glucose units. Acts as an overall regulator of starch mobilization. Required for starch degradation, suggesting that the phosphate content of starch regulates its degradability. This is Alpha-glucan water dikinase 1, chloroplastic from Arabidopsis thaliana (Mouse-ear cress).